A 504-amino-acid chain; its full sequence is L-carnitine/gamma-butyrobetaine antiporter (504 aa).

Transmembrane regions (helical) follow at residues 10–30 (IEPKVFFPPLIIVGILCWLTV), 51–71 (WGWAFEWYMVVMLFGWFWLVF), 92–112 (IFMMFASCTSAAVLFWGSIEI), 143–163 (GPLPWATYSFLSVAFAYFFFV), 195–215 (FYLVALIFAMGTSLGLATPLV), 231–251 (LDAIIITCWIILNAICVACGL), 263–283 (SYLSFLMLGWVFIVSGASFIM), 316–336 (WTVFYWAWWVIYAIQMSIFLA), 347–367 (LCFGMVLGLTASTWILWTVLG), 398–418 (WAALPLSTATMWGFFILCFIA), 446–466 (LLVRIGWSILVGIIGIVLLAL), and 475–495 (AIIAGGCPLFFVNIMVTLSFI).

It belongs to the BCCT transporter (TC 2.A.15) family. CaiT subfamily. As to quaternary structure, homotrimer.

Its subcellular location is the cell inner membrane. It catalyses the reaction 4-(trimethylamino)butanoate(in) + (R)-carnitine(out) = 4-(trimethylamino)butanoate(out) + (R)-carnitine(in). It functions in the pathway amine and polyamine metabolism; carnitine metabolism. Catalyzes the exchange of L-carnitine for gamma-butyrobetaine. This Escherichia coli (strain ATCC 8739 / DSM 1576 / NBRC 3972 / NCIMB 8545 / WDCM 00012 / Crooks) protein is L-carnitine/gamma-butyrobetaine antiporter.